A 388-amino-acid polypeptide reads, in one-letter code: Succinate--CoA ligase [ADP-forming] subunit beta (388 aa).

The 236-residue stretch at 9-244 folds into the ATP-grasp domain; it reads KQLFQKYGVP…LDEEDPFEIE (236 aa). Residues K46, 53-55, E99, L102, and E107 contribute to the ATP site; that span reads GRG. Residues N199 and D213 each coordinate Mg(2+). Substrate is bound by residues N265 and 322–324; that span reads GIL.

The protein belongs to the succinate/malate CoA ligase beta subunit family. As to quaternary structure, heterotetramer of two alpha and two beta subunits. It depends on Mg(2+) as a cofactor.

It carries out the reaction succinate + ATP + CoA = succinyl-CoA + ADP + phosphate. The enzyme catalyses GTP + succinate + CoA = succinyl-CoA + GDP + phosphate. It functions in the pathway carbohydrate metabolism; tricarboxylic acid cycle; succinate from succinyl-CoA (ligase route): step 1/1. In terms of biological role, succinyl-CoA synthetase functions in the citric acid cycle (TCA), coupling the hydrolysis of succinyl-CoA to the synthesis of either ATP or GTP and thus represents the only step of substrate-level phosphorylation in the TCA. The beta subunit provides nucleotide specificity of the enzyme and binds the substrate succinate, while the binding sites for coenzyme A and phosphate are found in the alpha subunit. This Syntrophobacter fumaroxidans (strain DSM 10017 / MPOB) protein is Succinate--CoA ligase [ADP-forming] subunit beta.